Consider the following 288-residue polypeptide: Putative sugar uptake protein gbs2116 (288 aa).

10 consecutive transmembrane segments (helical) span residues 4–26 (LLIA…KIGG), 33–50 (FGMT…WLFK), 55–72 (TASL…WSVG), 85–107 (VSVA…GALV), 117–134 (FILG…FYFS), 154–171 (FATI…AVLF), 181–200 (AVIL…FMKF), 207–229 (VVVK…LLAA), 234–256 (LAIA…ILFL), and 268–285 (VVMG…LGIV).

This sequence belongs to the GRP transporter (TC 2.A.7.5) family.

The protein resides in the cell membrane. In Streptococcus agalactiae serotype III (strain NEM316), this protein is Putative sugar uptake protein gbs2116.